Consider the following 558-residue polypeptide: MERVVKLAAKHCPFVSKADPSALRRMAGAGLIRAGARCPVVRHALPVAAATGADVSRGFKSDSKQMAMEPSLDEIHLKAGVVNTGSRTCRHADAVKAAAEAATTTPVTKKHQMPKHYASDLNGVGPATTPRFDYDTFYREELDKKHRDKSYRYFNNINRLAKEYPLAHLADPNTRVEVWCSNDYLNMGGHKKIREAMHQCIETYGGGAGGTRNIAGHNQHAVRLEKSLADLHQKPAALVFGSCYVANDATLSTLGRKLPNCIFLSDEMNHASMINGIRNSRCEKIIFKHNDLVDLEAKLASLPLNRPKIIAFESVYSMSGNVAPISEICDLAKKYGAITFLDEVHAVGMYGPRGAGVAEETPGLLSRVDIITGTLAKSYGCVGGYIAASSTLVDMIRSLAPGFIFTTSLPPHVMVGALTAVEHLKVSNVEREQQRSAVRRVKQSLSEIGIPVLSNDTHIVPAMVGDAHLAKLASDSLLHDHNIYVQSINFPTVSVGTERLRITPTPAHNTEHYVQSLTNAMNDVWSKFNINRIDGWEKRGIDVGRLCKFPVLPFTTTH.

Residues 1 to 25 (MERVVKLAAKHCPFVSKADPSALRR) constitute a mitochondrion transit peptide. The segment at 103-124 (TTTPVTKKHQMPKHYASDLNGV) is disordered. Arginine 152, serine 265, and lysine 284 together coordinate substrate. Positions 317, 345, and 374 each coordinate pyridoxal 5'-phosphate. The active site involves lysine 377. The residue at position 377 (lysine 377) is an N6-(pyridoxal phosphate)lysine. The pyridoxal 5'-phosphate site is built by threonine 406 and threonine 407. Substrate is bound at residue threonine 492.

The protein belongs to the class-II pyridoxal-phosphate-dependent aminotransferase family. In terms of assembly, homodimer. Requires pyridoxal 5'-phosphate as cofactor.

Its subcellular location is the mitochondrion matrix. The catalysed reaction is succinyl-CoA + glycine + H(+) = 5-aminolevulinate + CO2 + CoA. It participates in porphyrin-containing compound metabolism; protoporphyrin-IX biosynthesis; 5-aminolevulinate from glycine: step 1/1. Functionally, catalyzes the synthesis of 5-aminolevulinate (ALA) from succinyl-CoA and glycine, the first and rate-limiting step in heme biosynthesis. The sequence is that of 5-aminolevulinate synthase, mitochondrial from Schizosaccharomyces pombe (strain 972 / ATCC 24843) (Fission yeast).